A 1075-amino-acid polypeptide reads, in one-letter code: DNA-directed RNA polymerase subunit beta (1075 aa).

This sequence belongs to the RNA polymerase beta chain family. In plastids the minimal PEP RNA polymerase catalytic core is composed of four subunits: alpha, beta, beta', and beta''. When a (nuclear-encoded) sigma factor is associated with the core the holoenzyme is formed, which can initiate transcription.

The protein resides in the plastid. It is found in the chloroplast. The catalysed reaction is RNA(n) + a ribonucleoside 5'-triphosphate = RNA(n+1) + diphosphate. In terms of biological role, DNA-dependent RNA polymerase catalyzes the transcription of DNA into RNA using the four ribonucleoside triphosphates as substrates. The chain is DNA-directed RNA polymerase subunit beta from Oryza sativa (Rice).